A 486-amino-acid polypeptide reads, in one-letter code: Cardiolipin synthase A (486 aa).

The next 2 helical transmembrane spans lie at 3–23 and 38–58; these read IFYDLIKWLVVLIYWLLIANI and MSWLLTIYIIPFIGIAIWFFF. PLD phosphodiesterase domains are found at residues 219–246 and 399–426; these read LDVRQHRKIILIDNYISYSGSMNLVDPY and KKGLLHSKSILIDQQLSLIGTVNLDMRS. Active-site residues include His224, Lys226, Asp231, His404, Lys406, and Asp411.

It belongs to the phospholipase D family. Cardiolipin synthase subfamily. ClsA sub-subfamily.

It is found in the cell inner membrane. The enzyme catalyses 2 a 1,2-diacyl-sn-glycero-3-phospho-(1'-sn-glycerol) = a cardiolipin + glycerol. Its function is as follows. Catalyzes the reversible phosphatidyl group transfer from one phosphatidylglycerol molecule to another to form cardiolipin (CL) (diphosphatidylglycerol) and glycerol. The chain is Cardiolipin synthase A from Buchnera aphidicola subsp. Schizaphis graminum (strain Sg).